A 20-amino-acid chain; its full sequence is Unknown protein from 2D-PAGE of needles (20 aa).

This chain is Unknown protein from 2D-PAGE of needles, found in Pinus pinaster (Maritime pine).